Here is a 798-residue protein sequence, read N- to C-terminus: Phenylalanine--tRNA ligase beta subunit (798 aa).

The region spanning 39 to 148 (SKHLGGFVVG…VTLAVGASLL (110 aa)) is the tRNA-binding domain. In terms of domain architecture, B5 spans 401–476 (DWQKSIVLRP…RINGYDNIPA (76 aa)). Mg(2+) contacts are provided by Asp-454, Asp-460, Glu-463, and Glu-464. The 94-residue stretch at 704-797 (SALQPLDRDF…VAKATGGELR (94 aa)) folds into the FDX-ACB domain.

The protein belongs to the phenylalanyl-tRNA synthetase beta subunit family. Type 1 subfamily. Tetramer of two alpha and two beta subunits. It depends on Mg(2+) as a cofactor.

The protein localises to the cytoplasm. The enzyme catalyses tRNA(Phe) + L-phenylalanine + ATP = L-phenylalanyl-tRNA(Phe) + AMP + diphosphate + H(+). This Paramagnetospirillum magneticum (strain ATCC 700264 / AMB-1) (Magnetospirillum magneticum) protein is Phenylalanine--tRNA ligase beta subunit.